The following is a 425-amino-acid chain: Ribosome biogenesis protein WDR12 homolog (425 aa).

The ubiquitin-like (UBL) domain stretch occupies residues 7–93; sequence IQAKFFTKDE…ETIVHLEYLE (87 aa). WD repeat units follow at residues 105 to 142, 145 to 187, 194 to 233, 265 to 303, 305 to 344, 350 to 390, and 394 to 425; these read IHDD…RRLT, GHLG…NAVE, GHAR…TDTD, GHHE…MKSQ, AGSK…GTIV, SHAG…APLY, and GHED…FEHK. The disordered stretch occupies residues 227-253; the sequence is PDSTDTDHGQDGSEEGSRKKQKTVDGK. Residues 231–253 are compositionally biased toward basic and acidic residues; sequence DTDHGQDGSEEGSRKKQKTVDGK.

Belongs to the WD repeat WDR12/YTM1 family.

It is found in the nucleus. The protein localises to the nucleolus. The protein resides in the nucleoplasm. Required for maturation of ribosomal RNAs and formation of the large ribosomal subunit. The polypeptide is Ribosome biogenesis protein WDR12 homolog (Ixodes scapularis (Black-legged tick)).